Here is an 80-residue protein sequence, read N- to C-terminus: DNA-binding protein HU-like (80 aa).

This sequence belongs to the bacterial histone-like protein family.

Functionally, histone-like DNA-binding protein which is capable of wrapping DNA to stabilize it, and thus to prevent its denaturation under extreme environmental conditions. This is DNA-binding protein HU-like from Rickettsia rickettsii (strain Sheila Smith).